Consider the following 549-residue polypeptide: Rhodopsin kinase grk7a (549 aa).

A Phosphoserine modification is found at serine 33. One can recognise an RGS domain in the interval 53–171; sequence FESLCEKQPI…QASPFFDKFL (119 aa). One can recognise a Protein kinase domain in the interval 186-449; that stretch reads FYEFRTLGKG…NDDPRKHEWF (264 aa). Residues 192-200 and lysine 215 each bind ATP; that span reads LGKGGFGEV. The active-site Proton acceptor is aspartate 311. In terms of domain architecture, AGC-kinase C-terminal spans 450 to 515; the sequence is KSINFARLEA…GAVSIAWQQE (66 aa). Residues 522–549 are disordered; the sequence is FDELSDPNRKESSGGSDDDKKSGTCTLL. Over residues 527–543 the composition is skewed to basic and acidic residues; it reads DPNRKESSGGSDDDKKS. The residue at position 546 (cysteine 546) is a Cysteine methyl ester. Cysteine 546 carries S-geranylgeranyl cysteine lipidation. A propeptide spans 547 to 549 (removed in mature form); that stretch reads TLL.

Belongs to the protein kinase superfamily. AGC Ser/Thr protein kinase family. GPRK subfamily. Post-translationally, phosphorylation at Ser-33 is regulated by light and activated by cAMP.

Its subcellular location is the membrane. The enzyme catalyses L-threonyl-[rhodopsin] + ATP = O-phospho-L-threonyl-[rhodopsin] + ADP + H(+). It catalyses the reaction L-seryl-[rhodopsin] + ATP = O-phospho-L-seryl-[rhodopsin] + ADP + H(+). Functionally, retina-specific kinase involved in the shutoff of the photoresponse and adaptation to changing light conditions via cone opsin phosphorylation, including rhodopsin (RHO). The protein is Rhodopsin kinase grk7a (grk7a) of Danio rerio (Zebrafish).